Reading from the N-terminus, the 461-residue chain is Gram-negative bacteria-binding protein 2 (461 aa).

A signal peptide spans 1-20 (MRWEFLPCLLLLISNNKIFG). In terms of domain architecture, CBM39 spans 21-115 (FKVPSINFEM…TRVIINTRLL (95 aa)). N-linked (GlcNAc...) asparagine glycosylation is found at Asn71, Asn170, Asn177, and Asn364. The GH16 domain occupies 179 to 461 (TTWKHDIRQR…VIDYVRVYAE (283 aa)).

This sequence belongs to the insect beta-1,3-glucan binding protein family.

It is found in the secreted. In terms of biological role, involved in the recognition of invading microorganisms. Binds specifically to beta-1,3-glucan and activates the phenoloxidase cascade. In Drosophila melanogaster (Fruit fly), this protein is Gram-negative bacteria-binding protein 2.